The chain runs to 455 residues: Argininosuccinate lyase (455 aa).

This sequence belongs to the lyase 1 family. Argininosuccinate lyase subfamily.

The protein localises to the cytoplasm. The enzyme catalyses 2-(N(omega)-L-arginino)succinate = fumarate + L-arginine. The protein operates within amino-acid biosynthesis; L-arginine biosynthesis; L-arginine from L-ornithine and carbamoyl phosphate: step 3/3. In Shewanella baltica (strain OS155 / ATCC BAA-1091), this protein is Argininosuccinate lyase.